The sequence spans 87 residues: Small ribosomal subunit protein uS17 (87 aa).

It belongs to the universal ribosomal protein uS17 family. Part of the 30S ribosomal subunit.

One of the primary rRNA binding proteins, it binds specifically to the 5'-end of 16S ribosomal RNA. The sequence is that of Small ribosomal subunit protein uS17 from Bacillus mycoides (strain KBAB4) (Bacillus weihenstephanensis).